A 372-amino-acid polypeptide reads, in one-letter code: Trihelix transcription factor GT-4 (372 aa).

In terms of domain architecture, Myb-like spans 47–111; it reads APKKRAETWA…MCTDKWRNIL (65 aa). Ser-167 carries the post-translational modification Phosphoserine.

It localises to the nucleus. In terms of biological role, probable transcription factor that binds specific DNA sequence. The chain is Trihelix transcription factor GT-4 (GT-4) from Arabidopsis thaliana (Mouse-ear cress).